The primary structure comprises 249 residues: Putative protein SNX29P2 (249 aa).

Disordered regions lie at residues 109-171 (QVTN…SNSW) and 188-249 (DVKS…PGFK). Over residues 156 to 170 (SPFGPNSNGSQSSNS) the composition is skewed to low complexity. Residues 193-204 (DDEDVDENEDDV) are compositionally biased toward acidic residues. A compositionally biased stretch (polar residues) spans 226–242 (HSVTQAGVQWHDLSSLQ).

Belongs to the sorting nexin family.

The polypeptide is Putative protein SNX29P2 (SNX29P2) (Homo sapiens (Human)).